A 60-amino-acid polypeptide reads, in one-letter code: Toxin 4.9.6 (60 aa).

4 disulfide bridges follow: Cys3–Cys22, Cys17–Cys38, Cys40–Cys52, and Cys53–Cys58.

The protein belongs to the three-finger toxin family. Short-chain subfamily. Orphan group XI sub-subfamily. In terms of tissue distribution, expressed by the venom gland.

The protein resides in the secreted. The sequence is that of Toxin 4.9.6 from Dendroaspis viridis (Western green mamba).